We begin with the raw amino-acid sequence, 425 residues long: UPF0597 protein Moth_1414 (425 aa).

It belongs to the UPF0597 family.

The sequence is that of UPF0597 protein Moth_1414 from Moorella thermoacetica (strain ATCC 39073 / JCM 9320).